A 1217-amino-acid chain; its full sequence is ATP-dependent helicase/nuclease subunit A (1217 aa).

In terms of domain architecture, UvrD-like helicase ATP-binding spans 10-475; sequence VIWTDAQWQS…IDLSQNFRSR (466 aa). ATP is bound at residue 31–38; it reads AAAGSGKT. Residues 476–786 form the UvrD-like helicase C-terminal domain; the sequence is KEVLSTTNYI…RMMTIHSSKG (311 aa).

Belongs to the helicase family. AddA subfamily. As to quaternary structure, heterodimer of AddA and AddB/RexB. Mg(2+) serves as cofactor.

It carries out the reaction Couples ATP hydrolysis with the unwinding of duplex DNA by translocating in the 3'-5' direction.. The enzyme catalyses ATP + H2O = ADP + phosphate + H(+). In terms of biological role, the heterodimer acts as both an ATP-dependent DNA helicase and an ATP-dependent, dual-direction single-stranded exonuclease. Recognizes the chi site generating a DNA molecule suitable for the initiation of homologous recombination. The AddA nuclease domain is required for chi fragment generation; this subunit has the helicase and 3' -&gt; 5' nuclease activities. The polypeptide is ATP-dependent helicase/nuclease subunit A (Staphylococcus aureus (strain MW2)).